A 431-amino-acid chain; its full sequence is MSKIVKIIGREIIDSRGNPTVEAEVHLEGGFVGMAAAPSGASTGSREALELRDGDKSRFLGKGVTKAVAAVNGPIAQALIGKDAKDQAGIDKIMIDLDGTENKSKFGANAILAVSLANAKAAAAAKGMPLYEHIAELNGTPGKYSMPVPMMNIINGGEHADNNVDIQEFMIQPVGAKTVKEAIRMGSEVFHHLAKVLKAKGMNTAVGDEGGYAPNLGSNAEALAVIAEAVKAAGYELGKDITLAMDCAASEFYKDGKYVLAGEGNKAFTSEEFTHFLEELTKQYPIVSIEDGLDESDWDGFAYQTKFWRQNPAGCDDLFVTNTKILKEGIEKGIANSILIKFNQIGSLTETLAAIKMAKDAGYTAVISHRSGETEDATIADLAVGTAAGQIKTGSMSRSDRVAKYNQLIRIEEALGEKAPYNGRKEIKGQA.

Residue Gln-167 participates in (2R)-2-phosphoglycerate binding. The active-site Proton donor is the Glu-209. The Mg(2+) site is built by Asp-246, Glu-290, and Asp-316. (2R)-2-phosphoglycerate contacts are provided by Lys-341, Arg-370, Ser-371, and Lys-392. Lys-341 functions as the Proton acceptor in the catalytic mechanism.

This sequence belongs to the enolase family. As to quaternary structure, component of the RNA degradosome, a multiprotein complex involved in RNA processing and mRNA degradation. Requires Mg(2+) as cofactor.

The protein localises to the cytoplasm. It is found in the secreted. It localises to the cell surface. The catalysed reaction is (2R)-2-phosphoglycerate = phosphoenolpyruvate + H2O. Its pathway is carbohydrate degradation; glycolysis; pyruvate from D-glyceraldehyde 3-phosphate: step 4/5. In terms of biological role, catalyzes the reversible conversion of 2-phosphoglycerate (2-PG) into phosphoenolpyruvate (PEP). It is essential for the degradation of carbohydrates via glycolysis. The sequence is that of Enolase from Shigella flexneri serotype 5b (strain 8401).